The following is a 622-amino-acid chain: V-type ATP synthase subunit I 1 (622 aa).

Helical transmembrane passes span 306-326, 328-348, 373-393, 428-448, 459-479, 485-505, 532-552, and 562-582; these read WVNLISPLMNFLGTVPGYWEV, ISGFFLLFFGVFFSIIFADAG, PAWCLGLYLGTLTMVWGALVC, QMHVCFFLGLLHLCLGHLIVV, AEFGSLLMLGGMYVVVLNLIV, PLTGMIVGSIIAGFVLNFIFV, VFADVMSYIRLWAVGLAGGAI, and PLFANFLAFLGIVLLLFGHGL.

Belongs to the V-ATPase 116 kDa subunit family.

The protein localises to the cell membrane. Produces ATP from ADP in the presence of a proton gradient across the membrane. The chain is V-type ATP synthase subunit I 1 (atpI1) from Treponema pallidum (strain Nichols).